Consider the following 152-residue polypeptide: Transcriptional regulator MraZ (152 aa).

2 consecutive SpoVT-AbrB domains span residues Ala5 to Glu52 and Ala81 to Thr124.

This sequence belongs to the MraZ family. As to quaternary structure, forms oligomers.

It localises to the cytoplasm. It is found in the nucleoid. In terms of biological role, negatively regulates its own expression and that of the subsequent genes in the proximal part of the division and cell wall (dcw) gene cluster. Acts by binding directly to DNA. May also regulate the expression of genes outside the dcw cluster. This chain is Transcriptional regulator MraZ, found in Salmonella paratyphi A (strain ATCC 9150 / SARB42).